The primary structure comprises 265 residues: ETS-related transcription factor Elf-5 (265 aa).

A PNT domain is found at 43–129 (YPAFEHQTAC…FILQNIRTQG (87 aa)). Residues 173–254 (SHLWEFVRDL…VDRRLVYKFG (82 aa)) constitute a DNA-binding region (ETS).

This sequence belongs to the ETS family. In terms of tissue distribution, expressed exclusively in tissues with a high content of epithelial cells. Highly expressed in salivary gland, mammary gland, kidney and prostate. Weakly expressed in placenta and lung. Isoform 1 and isoform 2 are differentially expressed in different tissues. In the kidney, only isoform 1 was expressed, while prostate expressed both isoforms, with levels of isoform 2 being higher. Expression is up-regulated during keratinocyte differentiation. Several epithelial carcinoma cell lines showed lack of expression.

It localises to the nucleus. Its function is as follows. Transcriptionally activator that may play a role in regulating the later stages of keratinocytes terminal differentiation. Isoform 2 binds to DNA sequences containing the consensus nucleotide core sequence GGA[AT]. Transcriptionally activates SPRR2A and the parotid gland-specific PSP promoters. In Homo sapiens (Human), this protein is ETS-related transcription factor Elf-5 (ELF5).